The chain runs to 106 residues: MRRRSSMDINRAIRVAVDTGNVVLGTKQAIKNIKHGEGQLVIVADNCAKDVKEDIFYYTKLSETPVYTHQATSIELGAICGKPFPVSALLVLEPGNSAILNVNNEE.

It belongs to the eukaryotic ribosomal protein eL30 family.

In Methanococcus maripaludis (strain C5 / ATCC BAA-1333), this protein is Large ribosomal subunit protein eL30.